The primary structure comprises 235 residues: Segregation and condensation protein A (235 aa).

Belongs to the ScpA family. In terms of assembly, component of a cohesin-like complex composed of ScpA, ScpB and the Smc homodimer, in which ScpA and ScpB bind to the head domain of Smc. The presence of the three proteins is required for the association of the complex with DNA.

The protein resides in the cytoplasm. Functionally, participates in chromosomal partition during cell division. May act via the formation of a condensin-like complex containing Smc and ScpB that pull DNA away from mid-cell into both cell halves. In Streptococcus equi subsp. equi (strain 4047), this protein is Segregation and condensation protein A.